The following is a 349-amino-acid chain: Phosphoribosylformylglycinamidine cyclo-ligase (349 aa).

Belongs to the AIR synthase family.

The protein resides in the cytoplasm. It carries out the reaction 2-formamido-N(1)-(5-O-phospho-beta-D-ribosyl)acetamidine + ATP = 5-amino-1-(5-phospho-beta-D-ribosyl)imidazole + ADP + phosphate + H(+). It participates in purine metabolism; IMP biosynthesis via de novo pathway; 5-amino-1-(5-phospho-D-ribosyl)imidazole from N(2)-formyl-N(1)-(5-phospho-D-ribosyl)glycinamide: step 2/2. The chain is Phosphoribosylformylglycinamidine cyclo-ligase from Lawsonia intracellularis (strain PHE/MN1-00).